A 170-amino-acid chain; its full sequence is Cytochrome b6-f complex subunit 4 (170 aa).

A run of 3 helical transmembrane segments spans residues 36–56, 95–115, and 131–151; these read LLYI…GLAV, LLGV…PFLE, and TVFL…TLPI.

It belongs to the cytochrome b family. PetD subfamily. The 4 large subunits of the cytochrome b6-f complex are cytochrome b6, subunit IV (17 kDa polypeptide, petD), cytochrome f and the Rieske protein, while the 4 small subunits are petG, petL, petM and petN. The complex functions as a dimer.

It is found in the plastid. It localises to the chloroplast thylakoid membrane. Its function is as follows. Component of the cytochrome b6-f complex, which mediates electron transfer between photosystem II (PSII) and photosystem I (PSI), cyclic electron flow around PSI, and state transitions. In Nymphaea alba (White water-lily), this protein is Cytochrome b6-f complex subunit 4.